Here is a 121-residue protein sequence, read N- to C-terminus: Small ribosomal subunit protein uS13 (121 aa).

The segment at 96-121 (PVRGQNTKNNARTRKGKAVAIAGKKK) is disordered. Over residues 106–121 (ARTRKGKAVAIAGKKK) the composition is skewed to basic residues.

Belongs to the universal ribosomal protein uS13 family. As to quaternary structure, part of the 30S ribosomal subunit. Forms a loose heterodimer with protein S19. Forms two bridges to the 50S subunit in the 70S ribosome.

Located at the top of the head of the 30S subunit, it contacts several helices of the 16S rRNA. In the 70S ribosome it contacts the 23S rRNA (bridge B1a) and protein L5 of the 50S subunit (bridge B1b), connecting the 2 subunits; these bridges are implicated in subunit movement. Contacts the tRNAs in the A and P-sites. This chain is Small ribosomal subunit protein uS13, found in Streptococcus gordonii (strain Challis / ATCC 35105 / BCRC 15272 / CH1 / DL1 / V288).